We begin with the raw amino-acid sequence, 285 residues long: Small ribosomal subunit protein uS5x (285 aa).

A compositionally biased stretch (basic and acidic residues) spans 1–19; the sequence is MAERGGERGVERGGERGDF. The interval 1–51 is disordered; that stretch reads MAERGGERGVERGGERGDFGRGFGGRGGRGDRGGRGRGGRGGRRGGRASEE. Over residues 35 to 46 the composition is skewed to basic residues; it reads RGRGGRGGRRGG. An S5 DRBM domain is found at 96 to 159; it reads LKDEVMKIMP…ILAKLSVVPV (64 aa).

Belongs to the universal ribosomal protein uS5 family. In terms of assembly, interacts with MBD6.

Component of the ribosome, a large ribonucleoprotein complex responsible for the synthesis of proteins in the cell. The small ribosomal subunit (SSU) binds messenger RNAs (mRNAs) and translates the encoded message by selecting cognate aminoacyl-transfer RNA (tRNA) molecules. The large subunit (LSU) contains the ribosomal catalytic site termed the peptidyl transferase center (PTC), which catalyzes the formation of peptide bonds, thereby polymerizing the amino acids delivered by tRNAs into a polypeptide chain. The nascent polypeptides leave the ribosome through a tunnel in the LSU and interact with protein factors that function in enzymatic processing, targeting, and the membrane insertion of nascent chains at the exit of the ribosomal tunnel. Plays a role in the assembly and function of the 40S ribosomal subunit. Mutations in this protein affects the control of translational fidelity. Involved in nucleolar processing of pre-18S ribosomal RNA and ribosome assembly. Also involved in RNA-directed DNA methylation (RdDM). This chain is Small ribosomal subunit protein uS5x, found in Arabidopsis thaliana (Mouse-ear cress).